Consider the following 405-residue polypeptide: Putative arsenical pump-driving ATPase (405 aa).

8–15 (GKGGVGKT) provides a ligand contact to ATP.

Belongs to the arsA ATPase family.

The catalysed reaction is arsenite(in) + ATP + H2O = arsenite(out) + ADP + phosphate + H(+). Its function is as follows. Anion-transporting ATPase. Catalyzes the extrusion of arsenite. The protein is Putative arsenical pump-driving ATPase of Prosthecochloris vibrioformis (Chlorobium vibrioforme).